Consider the following 569-residue polypeptide: Probable diguanylate cyclase DgcQ (569 aa).

A run of 2 helical transmembrane segments spans residues 25 to 45 (LGPG…STLL) and 365 to 385 (IALT…WYVI). The GGDEF domain maps to 433–568 (HPFSVIQVDL…GRNRVCASDN (136 aa)). Aspartate 441 contributes to the Mg(2+) binding site. Residues asparagine 449, histidine 454, and aspartate 458 each coordinate substrate. Residue glutamate 484 coordinates Mg(2+). The Proton acceptor role is filled by glutamate 484.

In terms of assembly, homodimer. Mg(2+) is required as a cofactor.

It localises to the cell inner membrane. It carries out the reaction 2 GTP = 3',3'-c-di-GMP + 2 diphosphate. It participates in glycan metabolism; bacterial cellulose biosynthesis. Its pathway is purine metabolism; 3',5'-cyclic di-GMP biosynthesis. Its function is as follows. Catalyzes the synthesis of cyclic-di-GMP (c-di-GMP) via the condensation of 2 GTP molecules. Cyclic-di-GMP is a second messenger which controls cell surface-associated traits in bacteria. Involved in the regulation of cellulose production. In Shigella sonnei (strain Ss046), this protein is Probable diguanylate cyclase DgcQ.